Consider the following 147-residue polypeptide: uncharacterized protein (147 aa).

The 104-residue stretch at 44–147 (LVGYIDKEIH…LKSIKERLSI (104 aa)) folds into the HTH LytTR-type domain.

It localises to the cytoplasm. This is an uncharacterized protein from Staphylococcus aureus (strain Mu50 / ATCC 700699).